Consider the following 301-residue polypeptide: Nucleotide-binding protein MAB_2783c (301 aa).

Residue 24 to 31 participates in ATP binding; it reads GLSGAGRG. Residue 75–78 coordinates GTP; it reads DVRS.

Belongs to the RapZ-like family.

Its function is as follows. Displays ATPase and GTPase activities. The protein is Nucleotide-binding protein MAB_2783c of Mycobacteroides abscessus (strain ATCC 19977 / DSM 44196 / CCUG 20993 / CIP 104536 / JCM 13569 / NCTC 13031 / TMC 1543 / L948) (Mycobacterium abscessus).